The following is a 115-amino-acid chain: Secapin (115 aa).

Positions 1–24 (MRFQVYILHLCFFILVVLTYLSQG) are cleaved as a signal peptide. A propeptide spanning residues 25 to 90 (QSYTTTTTTS…STENFDITNR (66 aa)) is cleaved from the precursor. Residues cysteine 99 and cysteine 110 are joined by a disulfide bond.

It belongs to the secapin family. Expressed in the epidermis, fat body and venom gland.

Its subcellular location is the secreted. Functionally, serine protease inhibitor which exhibits antifibrinolytic, antielastolytic and antimicrobial activities. Displays antimicrobial activity against bacteria and fungi. Likely functions in the innate immune response to microbial infection and possibly in the venom, as an antifibrinolytic agent. The recombinant form inhibits trypsin (IC(50)=80.02 nM, Ki=127.25 nM), chymotrypsin (IC(50)=393.78 nM, Ki=432.59 nM), the microbial serine proteases subtilisin A (IC(50)=379.20 nM, Ki=492.77 nM) and proteinase K (IC(50)=189.43 nM, Ki=271.76 nM), plasmin (IC(50)=457.98 nM, Ki=502.91 nM), human elastase (IC(50)=347.81 nM, Ki=469.90 nM) and porcine elastase (IC(50)=94.70 nM, Ki=125.62 nM). Does not inhibit thrombin. Binds to human plasmin and inhibits the plasmin-mediated degradation of fibrin to fibrin degradation products, indicating its role as an anti-fibrinolytic agent. Also binds to bacterial and fungal surfaces. Exhibits antimicrobial activity against the Gram-positive bacteria B.thuringiensis (MIC=4.21 uM) and P.larvae (MIC=11.13 uM), the Gram-negative bacteria E.coli (MIC=6.50 uM) and the multidrug-resistant A.baumannii (MIC=5 ug/ml, MBC=10 ug/ml), as well as against the fungus B.bassiana (IC(50)=2.57 uM). The synthetic peptide also exhibits antimicrobial activity against the Gram-positive bacterium P.larvae (MIC=41.12 uM), the Gram-negative bacterium P.aeruginosa (MIC=65.75 uM), and the fungus B.bassiana (IC(50)=44.27 uM). Is also able to prevent A.baumannii biofilm formation and eliminate established A.baumannii biofilms. In vitro, does not induce an inflammatory response and has no cytotoxic activity against mammalian cells. This chain is Secapin, found in Apis cerana (Indian honeybee).